A 446-amino-acid polypeptide reads, in one-letter code: Sterile alpha motif domain-containing protein 7 (446 aa).

Residues 94-168 (HTARTEMEMY…NLQGNPMLAA (75 aa)) form a required for localization to nuclear polycomb bodies region. Disordered regions lie at residues 187 to 207 (NTGNQKALDSDAESSKSQAEE) and 225 to 277 (KDPD…AWDD). Residues 232–249 (PSNQKSSETNEKPTTALA) are compositionally biased toward polar residues. The SAM domain occupies 327–392 (WTVDDVHSFI…SQVSQHVGSM (66 aa)).

Monomer, homodimer and homooligomer. Component of a Polycomb group (PcG) multiprotein PRC1-like complex. Interacts with PHC2, NR2E3 and SAMD11. Interacts with RNF1 in a PHC2-dependent manner. Expressed in the retina (at protein level). Expressed in the retinal inner and outer nuclear layers.

Its subcellular location is the nucleus. It is found in the cytoplasm. Functionally, component of a Polycomb group (PcG) multiprotein PRC1-like complex, essential for establishing rod photoreceptor cell identity and function by silencing nonrod gene expression in developing rod photoreceptor cells. Via its association with the PRC1-like complex, promotes epigenetic repressive marks H3K27me3 and H2AK119ub marks in nonrod genes, silencing their transcription. Represses Crx-controlled photoreceptor-specific gene expression. This Homo sapiens (Human) protein is Sterile alpha motif domain-containing protein 7 (SAMD7).